Consider the following 784-residue polypeptide: Ribosome biogenesis protein BOP1 homolog (784 aa).

Residues 1 to 11 are compositionally biased toward basic residues; it reads MTKKLALKRRG. The segment at 1 to 159 is disordered; it reads MTKKLALKRR…DSDTSDEEDI (159 aa). 4 stretches are compositionally biased toward acidic residues: residues 27–36, 45–54, 62–73, and 84–111; these read SENEEEEEDL, EDSTDDEGID, SEELQFESDEEG, and AEED…EDEE. 2 stretches are compositionally biased toward basic and acidic residues: residues 112-123 and 138-148; these read KVSKSKQSDDKP and LPKRDSSKPEY. Residues 149–158 are compositionally biased toward acidic residues; sequence QDSDTSDEED. WD repeat units lie at residues 445–486, 488–526, 570–612, 615–653, 656–695, 699–738, and 754–784; these read GHTD…RTIE, DEVV…KVLV, THFK…SQIP, KSKG…LVKK, TNSK…KPYQ, LHRN…DLLQ, and RDEF…RLYT.

This sequence belongs to the WD repeat BOP1/ERB1 family.

Its subcellular location is the nucleus. The protein localises to the nucleolus. The protein resides in the nucleoplasm. Required for maturation of ribosomal RNAs and formation of the large ribosomal subunit. This chain is Ribosome biogenesis protein BOP1 homolog, found in Drosophila sechellia (Fruit fly).